We begin with the raw amino-acid sequence, 404 residues long: Argininosuccinate synthase (404 aa).

Residues 11-19 and alanine 40 each bind ATP; that span reads AYSGGLDTS. L-citrulline contacts are provided by tyrosine 92 and serine 97. Glycine 122 contributes to the ATP binding site. Threonine 124, asparagine 128, and aspartate 129 together coordinate L-aspartate. Asparagine 128 contributes to the L-citrulline binding site. Positions 132, 181, 190, 266, and 278 each coordinate L-citrulline.

This sequence belongs to the argininosuccinate synthase family. Type 1 subfamily. In terms of assembly, homotetramer.

It localises to the cytoplasm. It carries out the reaction L-citrulline + L-aspartate + ATP = 2-(N(omega)-L-arginino)succinate + AMP + diphosphate + H(+). The protein operates within amino-acid biosynthesis; L-arginine biosynthesis; L-arginine from L-ornithine and carbamoyl phosphate: step 2/3. The chain is Argininosuccinate synthase from Moritella abyssi.